Reading from the N-terminus, the 453-residue chain is DNA repair protein RadA (453 aa).

The C4-type zinc finger occupies 11–28 (CNQCGATAPKWLGQCPGC). 93 to 100 (GDPGIGKS) lines the ATP pocket. The RadA KNRFG motif signature appears at 250–254 (KNRFG). The tract at residues 349–453 (DVFLSITGGL…TIKDAIRLLL (105 aa)) is lon-protease-like.

The protein belongs to the RecA family. RadA subfamily.

Its function is as follows. DNA-dependent ATPase involved in processing of recombination intermediates, plays a role in repairing DNA breaks. Stimulates the branch migration of RecA-mediated strand transfer reactions, allowing the 3' invading strand to extend heteroduplex DNA faster. Binds ssDNA in the presence of ADP but not other nucleotides, has ATPase activity that is stimulated by ssDNA and various branched DNA structures, but inhibited by SSB. Does not have RecA's homology-searching function. The polypeptide is DNA repair protein RadA (Chlamydia pneumoniae (Chlamydophila pneumoniae)).